A 102-amino-acid chain; its full sequence is Large ribosomal subunit protein uL24 (102 aa).

Belongs to the universal ribosomal protein uL24 family. In terms of assembly, part of the 50S ribosomal subunit.

Its function is as follows. One of two assembly initiator proteins, it binds directly to the 5'-end of the 23S rRNA, where it nucleates assembly of the 50S subunit. One of the proteins that surrounds the polypeptide exit tunnel on the outside of the subunit. This is Large ribosomal subunit protein uL24 from Rhizobium rhizogenes (strain K84 / ATCC BAA-868) (Agrobacterium radiobacter).